The chain runs to 736 residues: Prolyl 3-hydroxylase 3 (736 aa).

The signal sequence occupies residues 1–20 (MLRLLRPLLLLLLLPPPGSP). TPR repeat units follow at residues 37–70 (PDLL…QAAL), 154–187 (REPY…NPMH), and 216–249 (HWAA…SLAQ). The interval 253–275 (CRADCEGPEEQQGAEEEEDGAAS) is disordered. Residues 258-272 (EGPEEQQGAEEEEDG) are compositionally biased toward acidic residues. The TPR 4 repeat unit spans residues 316–349 (PNQLRRLHEAHAQVGNLSQAIENVLSVLLFYPED). N-linked (GlcNAc...) asparagine glycans are attached at residues Asn331 and Asn462. The region spanning 561–675 (THLVCRSAIE…RCALALWHTW (115 aa)) is the Fe2OG dioxygenase domain. Fe cation contacts are provided by His584, Asp586, and His656. Arg666 is an active-site residue. Residues 681–709 (EQEWIEAKELLQESQEEEEEEEEEMPSKD) adopt a coiled-coil conformation. The interval 689–736 (ELLQESQEEEEEEEEEMPSKDPSPEPPSRRHQRVQDKTGRAPRVREEL) is disordered. The segment covering 694–704 (SQEEEEEEEEE) has biased composition (acidic residues). Basic and acidic residues predominate over residues 721–736 (RVQDKTGRAPRVREEL). The short motif at 733–736 (REEL) is the Prevents secretion from ER element.

The protein belongs to the leprecan family. Identified in a complex with PLOD1 and P3H4. Fe cation serves as cofactor. The cofactor is L-ascorbate. Detected in fetal cartilage (at protein level). Weak expression in heart, lung, ovary and skeletal muscle.

The protein resides in the endoplasmic reticulum. The catalysed reaction is L-prolyl-[collagen] + 2-oxoglutarate + O2 = trans-3-hydroxy-L-prolyl-[collagen] + succinate + CO2. Part of a complex composed of PLOD1, P3H3 and P3H4 that catalyzes hydroxylation of lysine residues in collagen alpha chains and is required for normal assembly and cross-linkling of collagen fibrils. Required for normal hydroxylation of lysine residues in type I collagen chains in skin, bone, tendon, aorta and cornea. Required for normal skin stability via its role in hydroxylation of lysine residues in collagen alpha chains and in collagen fibril assembly. Apparently not required for normal prolyl 3-hydroxylation on collagen chains, possibly because it functions redundantly with other prolyl 3-hydroxylases. In Homo sapiens (Human), this protein is Prolyl 3-hydroxylase 3.